We begin with the raw amino-acid sequence, 606 residues long: Proton myo-inositol cotransporter hmit-1.1 (606 aa).

At 1 to 20 the chain is on the cytoplasmic side; sequence MVAVAAFSSSGQDKPAHTPK. A helical membrane pass occupies residues 21 to 41; sequence LGLFVYILAAASVIGGFLFGY. The Extracellular portion of the chain corresponds to 42–63; the sequence is DTSVVSAAMLYMPDAPGLKPMD. A helical membrane pass occupies residues 64–84; it reads TVWQEVLVSISPGMAAVGSLM. At 85 to 96 the chain is on the cytoplasmic side; that stretch reads SGTSSDYIGRRK. The chain crosses the membrane as a helical span at residues 97–117; the sequence is VILGASAIFTIGALVCAASVN. Residue K118 is a topological domain, extracellular. Residues 119 to 139 form a helical membrane-spanning segment; it reads IMLLVGRVLLGIAIGFASMIV. Over 140-152 the chain is Cytoplasmic; sequence PVYLGETAPTHVR. Residues 153–173 traverse the membrane as a helical segment; the sequence is GMLVAAFALMISFGQVVANIT. Residues 174 to 188 are Extracellular-facing; sequence GGAFSYIDPYNVGWR. Residues 189–209 traverse the membrane as a helical segment; the sequence is LMFAFAAVPSIIQFVCFMFLP. Residues 210 to 278 are Cytoplasmic-facing; sequence ETPRWLYENG…RILKTPHVLK (69 aa). The helical transmembrane segment at 279 to 299 threads the bilayer; that stretch reads ACFIGSMLQAFQQLAGINTIL. The Extracellular portion of the chain corresponds to 300–317; sequence YYTADIIRSSGISNNHTT. N-linked (GlcNAc...) asparagine glycosylation is present at N314. Residues 318–338 traverse the membrane as a helical segment; the sequence is IWISVLLSLCNFIGPFVPMSL. Topologically, residues 339 to 345 are cytoplasmic; the sequence is IEKVGRR. Residues 346 to 366 form a helical membrane-spanning segment; it reads IIFLFSCGLVVLSLVFIGVAF. Topologically, residues 367 to 464 are extracellular; that stretch reads LLVNHDSAAT…EKYYCDTKYT (98 aa). 2 N-linked (GlcNAc...) asparagine glycosylation sites follow: N387 and N445. Residues 465–485 traverse the membrane as a helical segment; it reads LLPIIACGVYLLTFSSGFTSL. Residues 486–501 lie on the Cytoplasmic side of the membrane; sequence PWVLNSEFYPMWARST. The helical transmembrane segment at 502-522 threads the bilayer; sequence CVAISTTSNWVFNLIIALTYL. The Extracellular segment spans residues 523–531; it reads SLTQVIGKY. A helical transmembrane segment spans residues 532–552; it reads GAFWLYAGLTVIAFIFILFLV. The Cytoplasmic segment spans residues 553–606; sequence PETKGYSIEEVEMLFMNKKQRREAESRRRETVTEVRSRMNSTVSFGQHNEVHKY.

It belongs to the major facilitator superfamily. Sugar transporter (TC 2.A.1.1) family. As to expression, expressed in the intestine.

The protein resides in the cell membrane. It carries out the reaction myo-inositol(out) + H(+)(out) = myo-inositol(in) + H(+)(in). Its function is as follows. H(+)-myo-inositol cotransporter. Probably by promoting the transport of myo-inositol regulates intracellular osmosis in response to hyperosmotic stress. This Caenorhabditis elegans protein is Proton myo-inositol cotransporter hmit-1.1.